Consider the following 142-residue polypeptide: FAD synthase (142 aa).

Residues 9-10 (TF), 14-17 (HPGH), and aspartate 92 each bind ATP.

Belongs to the archaeal FAD synthase family. As to quaternary structure, homodimer. Requires a divalent metal cation as cofactor.

It catalyses the reaction FMN + ATP + H(+) = FAD + diphosphate. Its pathway is cofactor biosynthesis; FAD biosynthesis; FAD from FMN: step 1/1. Its function is as follows. Catalyzes the transfer of the AMP portion of ATP to flavin mononucleotide (FMN) to produce flavin adenine dinucleotide (FAD) coenzyme. The polypeptide is FAD synthase (Halalkalicoccus jeotgali (strain DSM 18796 / CECT 7217 / JCM 14584 / KCTC 4019 / B3)).